The sequence spans 247 residues: 6-phosphogluconolactonase (247 aa).

It belongs to the glucosamine/galactosamine-6-phosphate isomerase family. 6-phosphogluconolactonase subfamily.

It carries out the reaction 6-phospho-D-glucono-1,5-lactone + H2O = 6-phospho-D-gluconate + H(+). The protein operates within carbohydrate degradation; pentose phosphate pathway; D-ribulose 5-phosphate from D-glucose 6-phosphate (oxidative stage): step 2/3. In terms of biological role, hydrolysis of 6-phosphogluconolactone to 6-phosphogluconate. This is 6-phosphogluconolactonase (pgl) from Mycobacterium leprae (strain TN).